The sequence spans 403 residues: Tryptophan synthase beta chain 1 (403 aa).

N6-(pyridoxal phosphate)lysine is present on Lys-93.

The protein belongs to the TrpB family. As to quaternary structure, tetramer of two alpha and two beta chains. Requires pyridoxal 5'-phosphate as cofactor.

The catalysed reaction is (1S,2R)-1-C-(indol-3-yl)glycerol 3-phosphate + L-serine = D-glyceraldehyde 3-phosphate + L-tryptophan + H2O. It functions in the pathway amino-acid biosynthesis; L-tryptophan biosynthesis; L-tryptophan from chorismate: step 5/5. The beta subunit is responsible for the synthesis of L-tryptophan from indole and L-serine. The protein is Tryptophan synthase beta chain 1 (trpB1) of Methanosarcina acetivorans (strain ATCC 35395 / DSM 2834 / JCM 12185 / C2A).